The chain runs to 123 residues: uncharacterized protein (123 aa).

Residues 1–25 form the signal peptide; the sequence is MKHGIKALLITLSLACAGMSHSALA. Over residues 40–53 the composition is skewed to low complexity; it reads EAPAAQSKAAVPAK. Residues 40–62 are disordered; it reads EAPAAQSKAAVPAKASDEEGTRV. HhH domains are found at residues 60–90 and 91–120; these read TRVS…IVSY and REEY…NLAV.

This is an uncharacterized protein from Escherichia coli (strain K12).